The following is a 564-amino-acid chain: MQTQKARNGSPDVPKKVSPRAARPLKIAALEPESSSSPISATNRTPKDKSPNVLNRRSPRSPVSEKKRPSRITELELLVSQLQEELKKAKDQISVSETSKKQAEQEAEESRKQLQEVSSKLEESQNQFVETSALEEETDKTGSLVFQSVSQECDWEFSATAGERAGLAAVAHEIRQLKLQIEMVASSEAGHVKQAELYNSEVQLLRGNLMDTLFHVENFRNQLKDCEISEAETEALATETLRQLENAKKAVEELKSDGTKAVESYKKMAVELEQSKSRMVWLEALVNKLQNNPADLENHEILLKDYESLRRGESNEMDEEVSSLRCEVERLRAALEASDKKDQEGNVEASSRLRIQAELQSELKIAKSEIDELKARLMDKETELQFISEERDNFSMKLMKNQKEIDVEAELKKLREAIENLKADLMDKETELQIVSDENETLKSDIHKSETDVQDAFLKLGIAMEEADKSSKKAVRVTEQLEATQASNSEMETELRKLKVQSNQWRKAAEAATAMLSAGNNGKFAENYNQTNSPYSEDIDDELTKKKNGNVLKKIGVLWKKPQK.

2 disordered regions span residues 1–73 and 88–135; these read MQTQ…SRIT and KAKD…SALE. The segment covering 33 to 44 has biased composition (polar residues); it reads ESSSSPISATNR. Basic and acidic residues-rich tracts occupy residues 63–73 and 98–123; these read VSEKKRPSRIT and TSKK…KLEE. Coiled-coil stretches lie at residues 70 to 133 and 231 to 514; these read SRIT…ETSA and AETE…AATA. Serine 533 is modified (phosphoserine).

Belongs to the ICR family. As to quaternary structure, interacts with ARAC11 in vitro. As to expression, expressed in flowers.

Acts as a scaffold, mediating interaction of ROPs with different proteins. The chain is Interactor of constitutive active ROPs 3 (ICR3) from Arabidopsis thaliana (Mouse-ear cress).